We begin with the raw amino-acid sequence, 240 residues long: RNA-binding protein pno1 (240 aa).

Residues Met-1 to Lys-15 show a composition bias toward basic and acidic residues. Positions Met-1–Ser-61 are disordered. Positions Gln-164–Val-213 constitute a KH domain.

Belongs to the PNO1 family.

It localises to the nucleus. The protein localises to the nucleolus. The chain is RNA-binding protein pno1 (l(1)G0004) from Drosophila melanogaster (Fruit fly).